The following is a 350-amino-acid chain: Putative F-box protein At1g23770 (350 aa).

Over residues 1 to 15 (MDTGFADSNNDSSPG) the composition is skewed to polar residues. Positions 1–29 (MDTGFADSNNDSSPGEGSKRGNSGIEGPV) are disordered. An F-box domain is found at 206–252 (PPCLMLLPTELKLKILELLPGVSIGYMACVCTEMRYLASDNDLWEHK).

This is Putative F-box protein At1g23770 from Arabidopsis thaliana (Mouse-ear cress).